The primary structure comprises 258 residues: Isoprenyl transferase 1 (258 aa).

Asp-39 is an active-site residue. A Mg(2+)-binding site is contributed by Asp-39. Substrate contacts are provided by residues 40–43 (GNRR), Trp-44, Arg-52, His-57, and 85–87 (SND). Asn-88 acts as the Proton acceptor in catalysis. Substrate is bound by residues Arg-92, Arg-207, and 213–215 (RLS). Glu-226 provides a ligand contact to Mg(2+).

It belongs to the UPP synthase family. As to quaternary structure, homodimer. Mg(2+) is required as a cofactor.

Its function is as follows. Catalyzes the condensation of isopentenyl diphosphate (IPP) with allylic pyrophosphates generating different type of terpenoids. This chain is Isoprenyl transferase 1, found in Tropheryma whipplei (strain TW08/27) (Whipple's bacillus).